Reading from the N-terminus, the 637-residue chain is Chaperone protein DnaK (637 aa).

The residue at position 203 (Thr-203) is a Phosphothreonine; by autocatalysis. A disordered region spans residues 600–637; sequence SAVYGQQQEQGAPAQEEPSAEGKKNDDEGTVEGEFREV. Residues 604 to 616 are compositionally biased toward low complexity; it reads GQQQEQGAPAQEE. Over residues 619–637 the composition is skewed to basic and acidic residues; it reads AEGKKNDDEGTVEGEFREV.

The protein belongs to the heat shock protein 70 family.

Functionally, acts as a chaperone. The chain is Chaperone protein DnaK from Dehalococcoides mccartyi (strain ATCC BAA-2266 / KCTC 15142 / 195) (Dehalococcoides ethenogenes (strain 195)).